A 369-amino-acid polypeptide reads, in one-letter code: 2-aminoethylphosphonate--pyruvate transaminase 1 (369 aa).

The residue at position 191 (lysine 191) is an N6-(pyridoxal phosphate)lysine.

Belongs to the class-V pyridoxal-phosphate-dependent aminotransferase family. PhnW subfamily. As to quaternary structure, homodimer. Pyridoxal 5'-phosphate serves as cofactor.

The enzyme catalyses (2-aminoethyl)phosphonate + pyruvate = phosphonoacetaldehyde + L-alanine. Functionally, involved in phosphonate degradation. The polypeptide is 2-aminoethylphosphonate--pyruvate transaminase 1 (Burkholderia lata (strain ATCC 17760 / DSM 23089 / LMG 22485 / NCIMB 9086 / R18194 / 383)).